The following is a 364-amino-acid chain: MLAVGAMEGPRQSAFLLSSPPLAALHSMAEMKTPLYPATYPPLPTGPPSSSSSSSSSSPSPPLGAHNPGGLKPPAAGGLSSLSSPPQQLSAATPHGINDILSRPSMPVASGAALPSASPSGSSSSSSSSASATSASAAAAAAAAAAAAAASSPAGLLAGLPRFSSLSPPPPPPGLYFSPSAAAVAAVGRYPKPLAELPGRAPIFWPGVMQSPPWRDARLACTPHQGSILLDKDGKRKHTRPTFSGQQIFALEKTFEQTKYLAGPERARLAYSLGMTESQVKVWFQNRRTKWRKKHAAEMATAKKKQDSETERLKGTSENEEEDDDYNKPLDPNSDDEKITQLLKKHKSSSGGLLLHASEAEGSS.

The segment at 35-134 (LYPATYPPLP…SSSSSASATS (100 aa)) is disordered. Composition is skewed to low complexity over residues 48-92 (PSSS…LSAA) and 109-134 (ASGA…SATS). The tract at residues 101 to 268 (LSRPSMPVAS…KYLAGPERAR (168 aa)) is repressor domain. Arginine 189 carries the asymmetric dimethylarginine modification. The segment at residues 236–295 (RKHTRPTFSGQQIFALEKTFEQTKYLAGPERARLAYSLGMTESQVKVWFQNRRTKWRKKH) is a DNA-binding region (homeobox). The tract at residues 294-364 (KHAAEMATAK…LHASEAEGSS (71 aa)) is disordered. Residues 304-317 (KKQDSETERLKGTS) show a composition bias toward basic and acidic residues. The tract at residues 306–364 (QDSETERLKGTSENEEEDDDYNKPLDPNSDDEKITQLLKKHKSSSGGLLLHASEAEGSS) is involved in DNA-binding.

As to expression, pancreatic beta cells.

It is found in the nucleus. In terms of biological role, together with NKX2-2 and IRX3 acts to restrict the generation of motor neurons to the appropriate region of the neural tube. Belongs to the class II proteins of neuronal progenitor factors, which are induced by SHH signals. Transcription factor which binds to specific A/T-rich DNA sequences in the promoter regions of a number of genes. Involved in transcriptional regulation in islet beta cells. Binds to the insulin promoter and is involved in regulation of the insulin gene. This chain is Homeobox protein Nkx-6.1 (NKX6-1), found in Mesocricetus auratus (Golden hamster).